The primary structure comprises 268 residues: Type III pantothenate kinase (268 aa).

18–25 (DIGNTTTT) lines the ATP pocket. Substrate is bound by residues Tyr108 and 115 to 118 (GADR). Residue Asp117 is the Proton acceptor of the active site. Asp138 provides a ligand contact to K(+). Thr141 provides a ligand contact to ATP. Thr193 contributes to the substrate binding site.

The protein belongs to the type III pantothenate kinase family. In terms of assembly, homodimer. NH4(+) is required as a cofactor. K(+) serves as cofactor.

Its subcellular location is the cytoplasm. It catalyses the reaction (R)-pantothenate + ATP = (R)-4'-phosphopantothenate + ADP + H(+). Its pathway is cofactor biosynthesis; coenzyme A biosynthesis; CoA from (R)-pantothenate: step 1/5. Its function is as follows. Catalyzes the phosphorylation of pantothenate (Pan), the first step in CoA biosynthesis. This Chlorobaculum parvum (strain DSM 263 / NCIMB 8327) (Chlorobium vibrioforme subsp. thiosulfatophilum) protein is Type III pantothenate kinase.